The sequence spans 593 residues: ABC transporter F family member 2 (593 aa).

Residues 1–10 (MAKKGGKNNK) show a composition bias toward basic residues. The interval 1–25 (MAKKGGKNNKSKKEVTPPTSDVEDE) is disordered. 2 consecutive ABC transporter domains span residues 53-294 (VKIE…VNQM) and 364-583 (MHFD…RDLT). Residues 85–92 (GQNGCGKS) and 399–406 (GPNGAGKS) each bind ATP.

The protein belongs to the ABC transporter superfamily. ABCF family. EF3 subfamily.

This is ABC transporter F family member 2 (abcF2) from Dictyostelium discoideum (Social amoeba).